The following is a 96-amino-acid chain: Protein transport protein Sec61 subunit beta (96 aa).

The segment covering 1 to 17 has biased composition (polar residues); it reads MPGPTPSGTNVGSSGRS. Positions 1 to 54 are disordered; the sequence is MPGPTPSGTNVGSSGRSPSKAVAARAAGSTVRQRKNASCGTRSAGRTTSAGTGG. An N-acetylproline modification is found at Pro2. At 2 to 71 the chain is on the cytoplasmic side; the sequence is PGPTPSGTNV…DSPGLKVGPV (70 aa). Ser7 is modified (phosphoserine). Thr9 is modified (phosphothreonine). Ser13, Ser14, and Ser17 each carry phosphoserine. Cys39 is lipidated: S-palmitoyl cysteine. Positions 40 to 50 are enriched in low complexity; that stretch reads GTRSAGRTTSA. A helical transmembrane segment spans residues 72 to 91; that stretch reads PVLVMSLLFIASVFMLHIWG. Topologically, residues 92–96 are lumenal; it reads KYTRS.

It belongs to the SEC61-beta family. The SEC61 channel-forming translocon complex consists of channel-forming core components SEC61A1, SEC61B and SEC61G and different auxiliary components such as SEC62 and SEC63. The SEC61 channel associates with the multi-pass translocon (MPT) complex. Interacts with TRAM1.

It localises to the endoplasmic reticulum membrane. Its function is as follows. Component of SEC61 channel-forming translocon complex that mediates transport of signal peptide-containing precursor polypeptides across the endoplasmic reticulum (ER). Forms a ribosome receptor and a gated pore in the ER membrane, both functions required for cotranslational translocation of nascent polypeptides. The SEC61 channel is also involved in ER membrane insertion of transmembrane proteins: it mediates membrane insertion of the first few transmembrane segments of proteins, while insertion of subsequent transmembrane regions of multi-pass membrane proteins is mediated by the multi-pass translocon (MPT) complex. The SEC61 channel cooperates with the translocating protein TRAM1 to import nascent proteins into the ER. This Canis lupus familiaris (Dog) protein is Protein transport protein Sec61 subunit beta (SEC61B).